Reading from the N-terminus, the 114-residue chain is Small ribosomal subunit protein eS25 (114 aa).

The disordered stretch occupies residues 1–33; that stretch reads MAPKKDKAPPPSSKPAKSGGKQKKKKWSKGKQK. Basic residues predominate over residues 20-30; the sequence is GKQKKKKWSKG.

This sequence belongs to the eukaryotic ribosomal protein eS25 family.

In Amaranthus cruentus (Purple amaranth), this protein is Small ribosomal subunit protein eS25 (RPS25).